Here is a 79-residue protein sequence, read N- to C-terminus: Beta-defensin 15 (79 aa).

An N-terminal signal peptide occupies residues 1 to 20; that stretch reads MKTFLFLFAVFFFLDPAKNA. Cystine bridges form between Cys-26/Cys-53, Cys-33/Cys-47, and Cys-37/Cys-54.

The protein belongs to the beta-defensin family.

Its subcellular location is the secreted. In terms of biological role, has antibacterial activity. The polypeptide is Beta-defensin 15 (Defb15) (Rattus norvegicus (Rat)).